Reading from the N-terminus, the 146-residue chain is NADPH-dependent 7-cyano-7-deazaguanine reductase (146 aa).

Cysteine 48 serves as the catalytic Thioimide intermediate. Aspartate 55 acts as the Proton donor in catalysis. Residues 70 to 72 (VES) and 89 to 90 (HE) each bind substrate.

It belongs to the GTP cyclohydrolase I family. QueF type 1 subfamily.

The protein resides in the cytoplasm. The enzyme catalyses 7-aminomethyl-7-carbaguanine + 2 NADP(+) = 7-cyano-7-deazaguanine + 2 NADPH + 3 H(+). The protein operates within tRNA modification; tRNA-queuosine biosynthesis. Functionally, catalyzes the NADPH-dependent reduction of 7-cyano-7-deazaguanine (preQ0) to 7-aminomethyl-7-deazaguanine (preQ1). The chain is NADPH-dependent 7-cyano-7-deazaguanine reductase from Helicobacter pylori (strain Shi470).